Consider the following 114-residue polypeptide: Nucleoid-associated protein Amet_4780 (114 aa).

Positions 23 to 42 (QKMQKDMEKTQAALEEKEVE) are disordered. A compositionally biased stretch (basic and acidic residues) spans 25–42 (MQKDMEKTQAALEEKEVE).

It belongs to the YbaB/EbfC family. Homodimer.

Its subcellular location is the cytoplasm. The protein resides in the nucleoid. In terms of biological role, binds to DNA and alters its conformation. May be involved in regulation of gene expression, nucleoid organization and DNA protection. The sequence is that of Nucleoid-associated protein Amet_4780 from Alkaliphilus metalliredigens (strain QYMF).